The following is a 72-amino-acid chain: uncharacterized protein (72 aa).

The segment covering 1-38 (MSIFSSLSSLSTGSLKSSVSSIENGSSSGSFGSNETSG) has biased composition (low complexity). Residues 1-42 (MSIFSSLSSLSTGSLKSSVSSIENGSSSGSFGSNETSGWGQH) form a disordered region.

This is an uncharacterized protein from Dictyostelium discoideum (Social amoeba).